The primary structure comprises 469 residues: Melanopsin (469 aa).

Topologically, residues 1–71 are extracellular; the sequence is MDSPPGPTAP…VDVPDHAHYI (71 aa). Residue Asn30 is glycosylated (N-linked (GlcNAc...) asparagine). Residues 72-92 form a helical membrane-spanning segment; that stretch reads LGTVILLVGLTGMLGNLTVIY. The Cytoplasmic segment spans residues 93–106; the sequence is TFCRSRSLRTPANM. Residues 107 to 127 form a helical membrane-spanning segment; sequence LIINLAVSDFLMSFTQAPVFF. Residues 128–143 are Extracellular-facing; that stretch reads ASSLYKKWLFGETGCE. The cysteines at positions 142 and 220 are disulfide-linked. The chain crosses the membrane as a helical span at residues 144–164; it reads FYAFCGAVLGITSMITLTAIA. The Cytoplasmic segment spans residues 165–187; it reads LDRYLVITRPLATIGMGSKRRTA. The helical transmembrane segment at 188 to 208 threads the bilayer; that stretch reads LVLLGIWLYALAWSLPPFFGW. At 209 to 237 the chain is on the extracellular side; the sequence is SAYVPEGLLTSCSWDYVTFTPQVRAYTML. Residues 238–258 traverse the membrane as a helical segment; the sequence is LFCFVFFLPLLVIIFCYISIF. Over 259 to 295 the chain is Cytoplasmic; it reads RAIRETGRACEGWSESPQRRRQWHRLQSEWKMAKVAL. The helical transmembrane segment at 296–316 threads the bilayer; sequence IVILLFVLSWAPYSTVALVAF. Residues 317–328 lie on the Extracellular side of the membrane; sequence AGYSHILTPYMS. A helical membrane pass occupies residues 329-349; it reads SVPAVIAKASAIHNPIVYAIT. Lys336 bears the N6-(retinylidene)lysine mark. Residues 350-469 are Cytoplasmic-facing; the sequence is HPKYRAAIAQ…SLDLGMQDAP (120 aa). The interval 409–469 is disordered; the sequence is GSESEVGWTD…SLDLGMQDAP (61 aa).

It belongs to the G-protein coupled receptor 1 family. Opsin subfamily.

The protein localises to the cell membrane. It localises to the cell projection. Its subcellular location is the axon. The protein resides in the dendrite. It is found in the perikaryon. Photoreceptor that binds cis-retinaldehydes. Contributes to pupillar reflex, photoentrainment and other non-image forming responses to light. May be involved in the optokinetic visual tracking response. May be involved in the regulation of retinal hyaloid vessel growth and regression. The protein is Melanopsin (OPN4) of Phodopus sungorus (Striped hairy-footed hamster).